Here is a 774-residue protein sequence, read N- to C-terminus: MEPEREGTERHPRKVRESRQAPNKLVGAAEAMKAGWDLEESQPEAKKARLSTILFTDNCEVTHDQLCELLKYAVLGKSNVPKPSWCQLFHQNHLNNVVVFVLQGMSQLHFYRFYLEFGCLRKAFRHKFRLPPPSSDFLADVVGLQTEQRAGDLPKTMEGPLPSNAKAAINLQDDPIIQKYGSKKVGLTRCLLTKEEMRTFHFPLQGFPDCENFLLTKCNGSIADNSPLFGLDCEMCLTSKGRELTRISLVAEGGCCVMDELVKPENKILDYLTSFSGITKKILNPVTTKLKDVQRQLKALLPPDAVLVGHSLDLDLRALKMIHPYVIDTSLLYVREQGRRFKLKFLAKVILGKDIQCPDRLGHDATEDARTILELARYFLKHGPKKIAELNLEALANHQEIQAAGQEPKNTAEVLQHPNTSVLECLDSVGQKLLFLTRETDAGELPSSRNCQTIKCLSNKEVLEQARVEIPLFPFSIVQFSFKAFSPVLTEEMNKRMRIKWTEISTVYAGPFSKNCNLRALKRLFKSFGPVQSMTFVLETRQPHLCIQYEVLEAAQLAIESLDGILVDGICIKVQRPVTELTLDCDTLVNELEGDSENQGSIYLSGVSETFKEQLLQEPRLFLGLEAVILPKDLKSGKQKKYCFLKFKSFGSAQQALNILTGKDWKLKGRHALTPRHLHAWLRGLPPESTRLPGLRVVPPPFEQEALQTLKLDHPKIAAWRWSRKIGKLYNSLCPGTLCLILLPGTKSTHGSLSGLGLMGIKEEEESAGPGLCS.

The segment covering 1 to 19 (MEPEREGTERHPRKVRESR) has biased composition (basic and acidic residues). The segment at 1 to 22 (MEPEREGTERHPRKVRESRQAP) is disordered. An Exonuclease domain is found at 228–376 (LFGLDCEMCL…EDARTILELA (149 aa)). 2 consecutive RRM domains span residues 505 to 579 (STVY…RPVT) and 600 to 679 (GSIY…RHLH).

The chain is RNA exonuclease 5 from Homo sapiens (Human).